The following is a 123-amino-acid chain: Large ribosomal subunit protein uL29 (123 aa).

Belongs to the universal ribosomal protein uL29 family.

The protein is Large ribosomal subunit protein uL29 (RPL35) of Babesia bovis.